Reading from the N-terminus, the 61-residue chain is Weak toxin CM-1c (61 aa).

4 disulfides stabilise this stretch: Cys3–Cys21, Cys14–Cys37, Cys41–Cys53, and Cys54–Cys59.

Belongs to the three-finger toxin family. Short-chain subfamily. Orphan group VI sub-subfamily. In terms of tissue distribution, expressed by the venom gland.

The protein resides in the secreted. The chain is Weak toxin CM-1c from Hemachatus haemachatus (Rinkhals).